The sequence spans 553 residues: CTP synthase (553 aa).

The segment at 1-270 is amidoligase domain; the sequence is MTKYVFVTGG…DRLICEELRL (270 aa). Ser-13 provides a ligand contact to CTP. Ser-13 serves as a coordination point for UTP. ATP-binding positions include 14–19 and Asp-71; that span reads SLGKGI. 2 residues coordinate Mg(2+): Asp-71 and Glu-144. CTP is bound by residues 151-153, 191-196, and Lys-227; these read DIE and KTKPTQ. UTP contacts are provided by residues 191 to 196 and Lys-227; that span reads KTKPTQ. The Glutamine amidotransferase type-1 domain maps to 295–547; it reads TIGMVGKYVD…VQAALACQQT (253 aa). Gly-356 contributes to the L-glutamine binding site. Cys-383 serves as the catalytic Nucleophile; for glutamine hydrolysis. L-glutamine-binding positions include 384–387, Glu-407, and Arg-473; that span reads LGMQ. Catalysis depends on residues His-520 and Glu-522.

Belongs to the CTP synthase family. In terms of assembly, homotetramer.

The catalysed reaction is UTP + L-glutamine + ATP + H2O = CTP + L-glutamate + ADP + phosphate + 2 H(+). It carries out the reaction L-glutamine + H2O = L-glutamate + NH4(+). The enzyme catalyses UTP + NH4(+) + ATP = CTP + ADP + phosphate + 2 H(+). The protein operates within pyrimidine metabolism; CTP biosynthesis via de novo pathway; CTP from UDP: step 2/2. With respect to regulation, allosterically activated by GTP, when glutamine is the substrate; GTP has no effect on the reaction when ammonia is the substrate. The allosteric effector GTP functions by stabilizing the protein conformation that binds the tetrahedral intermediate(s) formed during glutamine hydrolysis. Inhibited by the product CTP, via allosteric rather than competitive inhibition. Catalyzes the ATP-dependent amination of UTP to CTP with either L-glutamine or ammonia as the source of nitrogen. Regulates intracellular CTP levels through interactions with the four ribonucleotide triphosphates. The sequence is that of CTP synthase from Burkholderia mallei (strain NCTC 10229).